Reading from the N-terminus, the 279-residue chain is ATP synthase gamma chain (279 aa).

It belongs to the ATPase gamma chain family. In terms of assembly, F-type ATPases have 2 components, CF(1) - the catalytic core - and CF(0) - the membrane proton channel. CF(1) has five subunits: alpha(3), beta(3), gamma(1), delta(1), epsilon(1). CF(0) has three main subunits: a, b and c.

It is found in the cell membrane. Its function is as follows. Produces ATP from ADP in the presence of a proton gradient across the membrane. The gamma chain is believed to be important in regulating ATPase activity and the flow of protons through the CF(0) complex. The sequence is that of ATP synthase gamma chain from Mycoplasma pneumoniae (strain ATCC 29342 / M129 / Subtype 1) (Mycoplasmoides pneumoniae).